The following is a 420-amino-acid chain: Glycerol-3-phosphate dehydrogenase [NAD(+)] (420 aa).

NAD(+) contacts are provided by residues 16–21 (GSGNWG), F48, and F119. Residue K142 participates in substrate binding. A175 provides a ligand contact to NAD(+). A disordered region spans residues 190-217 (YDPPPMDNSRAPTPRSNSPANGNGIAPL). Polar residues predominate over residues 199 to 210 (RAPTPRSNSPAN). K278 functions as the Proton acceptor in the catalytic mechanism. The NAD(+) site is built by R344 and Q373. 344-345 (RN) is a binding site for substrate.

Belongs to the NAD-dependent glycerol-3-phosphate dehydrogenase family.

The catalysed reaction is sn-glycerol 3-phosphate + NAD(+) = dihydroxyacetone phosphate + NADH + H(+). The polypeptide is Glycerol-3-phosphate dehydrogenase [NAD(+)] (Colletotrichum gloeosporioides (Anthracnose fungus)).